Reading from the N-terminus, the 508-residue chain is Light-independent protochlorophyllide reductase subunit B (508 aa).

Position 36 (Asp-36) interacts with [4Fe-4S] cluster. Asp-282 serves as the catalytic Proton donor. 417-418 (GL) is a substrate binding site.

This sequence belongs to the ChlB/BchB/BchZ family. In terms of assembly, protochlorophyllide reductase is composed of three subunits; BchL, BchN and BchB. Forms a heterotetramer of two BchB and two BchN subunits. It depends on [4Fe-4S] cluster as a cofactor.

It carries out the reaction chlorophyllide a + oxidized 2[4Fe-4S]-[ferredoxin] + 2 ADP + 2 phosphate = protochlorophyllide a + reduced 2[4Fe-4S]-[ferredoxin] + 2 ATP + 2 H2O. It functions in the pathway porphyrin-containing compound metabolism; bacteriochlorophyll biosynthesis (light-independent). In terms of biological role, component of the dark-operative protochlorophyllide reductase (DPOR) that uses Mg-ATP and reduced ferredoxin to reduce ring D of protochlorophyllide (Pchlide) to form chlorophyllide a (Chlide). This reaction is light-independent. The NB-protein (BchN-BchB) is the catalytic component of the complex. This chain is Light-independent protochlorophyllide reductase subunit B, found in Methylocella silvestris (strain DSM 15510 / CIP 108128 / LMG 27833 / NCIMB 13906 / BL2).